Consider the following 614-residue polypeptide: Protein NRT1/ PTR FAMILY 7.3 (614 aa).

A run of 2 helical transmembrane segments spans residues 41 to 61 (WVAGIVILLNQGLATLAFFGV) and 87 to 107 (WTGTVYIFSLVGAFLSDSYWG). Thr111 bears the Phosphothreonine mark. A run of 9 helical transmembrane segments spans residues 114–134 (IFQVIFVIGLSSLSLSSYMFL), 152–172 (MMEITMFYFSIYLIALGYGGY), 196–216 (IAFFSYFYLALNLGSLFSNTI), 226–246 (WALGFWASTGSAIIGLILFLV), 355–375 (PIWLCTIIYSVVFTQMASLFV), 390–410 (IPPASMSSFDILSVALFIFLY), 435–455 (MGIGLVIAVIAMIAAGIVECY), 515–535 (LCMMSMSMGNFVSSLLVTMVV), and 559–579 (FYFLLAALTSIDLVVYIACAK). Positions 592–614 (MQDMSDDDYDTESEEEREKDSKV) are disordered. The segment covering 593–606 (QDMSDDDYDTESEE) has biased composition (acidic residues).

The protein belongs to the major facilitator superfamily. Proton-dependent oligopeptide transporter (POT/PTR) (TC 2.A.17) family. In terms of tissue distribution, high expression in roots. Barely detected in shoots. Expressed in root pericycle cells close to the xylem.

It localises to the cell membrane. In terms of biological role, low-affinity proton-dependent bidirectional nitrate transporter. Involved in nitrate loading into xylem and not in nitrate uptake. Not involved in histidine or dipeptides transport. This chain is Protein NRT1/ PTR FAMILY 7.3 (NPF7.3), found in Arabidopsis thaliana (Mouse-ear cress).